A 201-amino-acid chain; its full sequence is ATP synthase subunit delta, chloroplastic (201 aa).

The protein belongs to the ATPase delta chain family. In terms of assembly, F-type ATPases have 2 components, F(1) - the catalytic core - and F(0) - the membrane proton channel. F(1) has five subunits: alpha(3), beta(3), gamma(1), delta(1), epsilon(1). CF(0) has four main subunits: a(1), b(1), b'(1) and c(10-14). The alpha and beta chains form an alternating ring which encloses part of the gamma chain. F(1) is attached to F(0) by a central stalk formed by the gamma and epsilon chains, while a peripheral stalk is formed by the delta, b and b' chains.

The protein localises to the plastid. The protein resides in the chloroplast thylakoid membrane. F(1)F(0) ATP synthase produces ATP from ADP in the presence of a proton or sodium gradient. F-type ATPases consist of two structural domains, F(1) containing the extramembraneous catalytic core and F(0) containing the membrane proton channel, linked together by a central stalk and a peripheral stalk. During catalysis, ATP synthesis in the catalytic domain of F(1) is coupled via a rotary mechanism of the central stalk subunits to proton translocation. In terms of biological role, this protein is part of the stalk that links CF(0) to CF(1). It either transmits conformational changes from CF(0) to CF(1) or is implicated in proton conduction. This is ATP synthase subunit delta, chloroplastic from Vaucheria litorea (Yellow-green alga).